The chain runs to 692 residues: Sodium- and chloride-dependent glycine transporter 1 (692 aa).

The segment at 1-34 (MIGGDTRAASAHPGMASAQGPVATPSPEQPFPGT) is disordered. The Cytoplasmic segment spans residues 1-94 (MIGGDTRAAS…TRGNWGNQIE (94 aa)). Transmembrane regions (helical) follow at residues 95–115 (FVLTSVGYAVGLGNVWRFPYL), 122–142 (GAFMFPYFIMLIFCGIPLFFM), and 174–194 (VSTYIGIYYNVVICIAFYYFF). The Extracellular segment spans residues 195–271 (SSMTHVLPWA…LSDDIGNFGE (77 aa)). 9 consecutive transmembrane segments (helical) span residues 272 to 292 (VRLPLLGCLGVSWVVVFLCLI), 301 to 321 (VVYFTATFPYVVLTILFVRGV), 346 to 366 (VWGDAASQIFYSLGCAWGGLI), 393 to 413 (SVYAGFVIFSILGFMANHLGV), 436 to 456 (LLPISPLWSLLFFFMLILLGL), 492 to 512 (VAGFLLGIPLTSQAGIYWLLL), 516 to 536 (YAASFSLVVISCIMCVSIMYI), 556 to 576 (LFFQICWRFVSPAIIFFILIF), and 596 to 616 (VAIGFLMALSSVICIPLYALF). Residues 617 to 692 (QLCRTDGDTL…GSSRFQDSRI (76 aa)) are Cytoplasmic-facing. T657 is subject to Phosphothreonine. 2 positions are modified to phosphoserine: S659 and S684. Positions 681 to 692 (SNGSSRFQDSRI) are essential for interaction with EXOC1.

Belongs to the sodium:neurotransmitter symporter (SNF) (TC 2.A.22) family. SLC6A9 subfamily. Interacts with EXOC1; interaction increases the transporter capacity of SLC6A9 probably by promoting its insertion into the cell membrane. Interacts with EXOC3 and EXOC4. Expressed in the brain (at protein level). At 11 dpc, expressed in the ventral part of the ventricular zone. At 15 dpc, also expressed in adjacent mantle tissue and the meninges. Strongly expressed in 12 dpc and 15 dpc liver. In terms of tissue distribution, expressed in the brain.

Its subcellular location is the cell membrane. The catalysed reaction is glycine(out) + chloride(out) + 2 Na(+)(out) = glycine(in) + chloride(in) + 2 Na(+)(in). Its function is as follows. Sodium- and chloride-dependent glycine transporter which is essential for regulating glycine concentrations at inhibitory glycinergic synapses. Sodium- and chloride-dependent glycine transporter. The polypeptide is Sodium- and chloride-dependent glycine transporter 1 (Slc6a9) (Mus musculus (Mouse)).